A 426-amino-acid chain; its full sequence is 3-phosphoshikimate 1-carboxyvinyltransferase (426 aa).

Positions 22, 23, and 27 each coordinate 3-phosphoshikimate. Residue Lys22 participates in phosphoenolpyruvate binding. Residues Gly96 and Arg124 each coordinate phosphoenolpyruvate. Residues Ser170, Ser171, Gln172, Ser198, Asp314, Asn337, and Lys341 each contribute to the 3-phosphoshikimate site. Gln172 lines the phosphoenolpyruvate pocket. The active-site Proton acceptor is the Asp314. Residues Arg345, Arg387, and Lys412 each contribute to the phosphoenolpyruvate site.

This sequence belongs to the EPSP synthase family. Monomer.

Its subcellular location is the cytoplasm. The catalysed reaction is 3-phosphoshikimate + phosphoenolpyruvate = 5-O-(1-carboxyvinyl)-3-phosphoshikimate + phosphate. It participates in metabolic intermediate biosynthesis; chorismate biosynthesis; chorismate from D-erythrose 4-phosphate and phosphoenolpyruvate: step 6/7. Its function is as follows. Catalyzes the transfer of the enolpyruvyl moiety of phosphoenolpyruvate (PEP) to the 5-hydroxyl of shikimate-3-phosphate (S3P) to produce enolpyruvyl shikimate-3-phosphate and inorganic phosphate. The polypeptide is 3-phosphoshikimate 1-carboxyvinyltransferase (Aliivibrio fischeri (strain MJ11) (Vibrio fischeri)).